Reading from the N-terminus, the 275-residue chain is Adenosylcobinamide-GDP ribazoletransferase (275 aa).

The next 6 membrane-spanning stretches (helical) occupy residues V52–G72, V73–M93, M126–V146, F181–L201, V208–A228, and I251–A271.

This sequence belongs to the CobS family. Requires Mg(2+) as cofactor.

Its subcellular location is the cell membrane. It catalyses the reaction alpha-ribazole + adenosylcob(III)inamide-GDP = adenosylcob(III)alamin + GMP + H(+). The enzyme catalyses alpha-ribazole 5'-phosphate + adenosylcob(III)inamide-GDP = adenosylcob(III)alamin 5'-phosphate + GMP + H(+). It functions in the pathway cofactor biosynthesis; adenosylcobalamin biosynthesis; adenosylcobalamin from cob(II)yrinate a,c-diamide: step 7/7. In terms of biological role, joins adenosylcobinamide-GDP and alpha-ribazole to generate adenosylcobalamin (Ado-cobalamin). Also synthesizes adenosylcobalamin 5'-phosphate from adenosylcobinamide-GDP and alpha-ribazole 5'-phosphate. The chain is Adenosylcobinamide-GDP ribazoletransferase from Corynebacterium efficiens (strain DSM 44549 / YS-314 / AJ 12310 / JCM 11189 / NBRC 100395).